The chain runs to 355 residues: S-adenosylmethionine:tRNA ribosyltransferase-isomerase (355 aa).

The protein belongs to the QueA family. As to quaternary structure, monomer.

Its subcellular location is the cytoplasm. It catalyses the reaction 7-aminomethyl-7-carbaguanosine(34) in tRNA + S-adenosyl-L-methionine = epoxyqueuosine(34) in tRNA + adenine + L-methionine + 2 H(+). Its pathway is tRNA modification; tRNA-queuosine biosynthesis. In terms of biological role, transfers and isomerizes the ribose moiety from AdoMet to the 7-aminomethyl group of 7-deazaguanine (preQ1-tRNA) to give epoxyqueuosine (oQ-tRNA). In Burkholderia ambifaria (strain ATCC BAA-244 / DSM 16087 / CCUG 44356 / LMG 19182 / AMMD) (Burkholderia cepacia (strain AMMD)), this protein is S-adenosylmethionine:tRNA ribosyltransferase-isomerase.